An 802-amino-acid polypeptide reads, in one-letter code: Endoplasmin (802 aa).

The first 21 residues, 1–21, serve as a signal peptide directing secretion; sequence MRALWVLGLCCVLLTFGSARA. An SRT pseudosubstrate motif motif is present at residues 42–44; the sequence is SRT. Asn62 is a glycosylation site (N-linked (GlcNAc...) asparagine). Phosphoserine is present on Ser64. The N-linked (GlcNAc...) asparagine glycan is linked to Asn107. Positions 107, 149, and 162 each coordinate ATP. Lys168 bears the N6-(2-hydroxyisobutyryl)lysine mark. Ser172 carries the post-translational modification Phosphoserine. Phe199 lines the ATP pocket. Asn217 carries an N-linked (GlcNAc...) asparagine glycan. The segment at 288–323 is disordered; sequence TVEEPAEEEEAAKEEKEEADDEAAVEEEEEEKKPKT. Residues 289 to 317 are compositionally biased toward acidic residues; that stretch reads VEEPAEEEEAAKEEKEEADDEAAVEEEEE. Residue Ser403 is modified to Phosphoserine. Position 404 is an N6-succinyllysine (Lys404). N-linked (GlcNAc...) asparagine glycosylation is present at Asn445. Phosphoserine is present on Ser447. Lys479 carries the N6-acetyllysine modification. Asn481 and Asn502 each carry an N-linked (GlcNAc...) asparagine glycan. The residue at position 633 (Lys633) is an N6-succinyllysine. Residues 750-802 form a disordered region; that stretch reads DPDAKVEEEPEEEPEDTTEDTEQDEEEEMDAGTDEEEQEQEPEKKSTAEKDEL. Residues 757–789 are compositionally biased toward acidic residues; it reads EEPEEEPEDTTEDTEQDEEEEMDAGTDEEEQEQ. Thr782 is subject to Phosphothreonine. Basic and acidic residues predominate over residues 790 to 802; sequence EPEKKSTAEKDEL. Positions 799–802 match the Prevents secretion from ER motif; the sequence is KDEL.

This sequence belongs to the heat shock protein 90 family. As to quaternary structure, homodimer; disulfide-linked. Component of an EIF2 complex at least composed of CELF1/CUGBP1, CALR, CALR3, EIF2S1, EIF2S2, HSP90B1 and HSPA5. Part of a large chaperone multiprotein complex comprising DNAJB11, HSP90B1, HSPA5, HYOU, PDIA2, PDIA4, PDIA6, PPIB, SDF2L1, UGGT1 and very small amounts of ERP29, but not, or at very low levels, CALR nor CANX. Interacts with AIMP1; regulates its retention in the endoplasmic reticulum. Hyperglycosylated form interacts with OS9; promoting its degradation by the endoplasmic reticulum associated degradation (ERAD). Interacts with CNPY3. This interaction is disrupted in the presence of ATP. Interacts with TLR4 and TLR9, but not with TLR3. Interacts with MZB1 in a calcium-dependent manner. Interacts with METTL23. Interacts with IL1B; the interaction facilitates cargo translocation into the ERGIC. Interacts with EIF2AK3. In terms of processing, phosphorylated by CK2. N-glycosylated cotranslationally at Asn-217 by STT3A-containing OST-A complex: this glycosylation is constitutive. In response to various stress, 5 additional facultative sites (Asn-62, Asn-107, Asn-445, Asn-481 and Asn-502) can be glycosylated post-translationally by STT3B-containing OST-B complex, leading to a hyperglycosylated form that is degraded by the ER-associated degradation (ERAD) pathway. In normal conditions, the OST-A complex together with CCDC134 prevent glycosylation at facultative sites during protein folding, thereby preventing hyperglycosylation. Mechanistically, nascent HSP90B1 is tethered during translation to a specialized CCDC134-containing translocon that forms a microenvironment for its folding, in which STT3A associates with the SRT pseudosubstrate motif, and prevents access to facultative glycosylation sites until folding is completed, rendering its facultative sites inaccessible to the OST-B complex.

The protein resides in the endoplasmic reticulum lumen. Its subcellular location is the sarcoplasmic reticulum lumen. The protein localises to the melanosome. It catalyses the reaction ATP + H2O = ADP + phosphate + H(+). In terms of biological role, ATP-dependent chaperone involved in the processing of proteins in the endoplasmic reticulum, regulating their transport. Together with MESD, acts as a modulator of the Wnt pathway by promoting the folding of LRP6, a coreceptor of the canonical Wnt pathway. When associated with CNPY3, required for proper folding of Toll-like receptors. Promotes folding and trafficking of TLR4 to the cell surface. May participate in the unfolding of cytosolic leaderless cargos (lacking the secretion signal sequence) such as the interleukin 1/IL-1 to facilitate their translocation into the ERGIC (endoplasmic reticulum-Golgi intermediate compartment) and secretion; the translocation process is mediated by the cargo receptor TMED10. The chain is Endoplasmin (HSP90B1) from Oryctolagus cuniculus (Rabbit).